The sequence spans 265 residues: 4-hydroxy-tetrahydrodipicolinate reductase (265 aa).

Residues glycine 7–methionine 12 and aspartate 33 contribute to the NAD(+) site. Residue arginine 34 coordinates NADP(+). Residues glycine 96–threonine 98 and alanine 120–methionine 123 contribute to the NAD(+) site. Histidine 153 functions as the Proton donor/acceptor in the catalytic mechanism. Residue histidine 154 participates in (S)-2,3,4,5-tetrahydrodipicolinate binding. Lysine 157 serves as the catalytic Proton donor. Glycine 163–threonine 164 contributes to the (S)-2,3,4,5-tetrahydrodipicolinate binding site.

Belongs to the DapB family.

Its subcellular location is the cytoplasm. The enzyme catalyses (S)-2,3,4,5-tetrahydrodipicolinate + NAD(+) + H2O = (2S,4S)-4-hydroxy-2,3,4,5-tetrahydrodipicolinate + NADH + H(+). It carries out the reaction (S)-2,3,4,5-tetrahydrodipicolinate + NADP(+) + H2O = (2S,4S)-4-hydroxy-2,3,4,5-tetrahydrodipicolinate + NADPH + H(+). It participates in amino-acid biosynthesis; L-lysine biosynthesis via DAP pathway; (S)-tetrahydrodipicolinate from L-aspartate: step 4/4. Catalyzes the conversion of 4-hydroxy-tetrahydrodipicolinate (HTPA) to tetrahydrodipicolinate. The chain is 4-hydroxy-tetrahydrodipicolinate reductase from Burkholderia ambifaria (strain ATCC BAA-244 / DSM 16087 / CCUG 44356 / LMG 19182 / AMMD) (Burkholderia cepacia (strain AMMD)).